Consider the following 329-residue polypeptide: uncharacterized protein (329 aa).

2 coiled-coil regions span residues 57–119 (KKEE…LQEV) and 224–250 (AQRQ…LGNV).

This is an uncharacterized protein from Macaca fascicularis (Crab-eating macaque).